The chain runs to 371 residues: Cysteine endopeptidase Rep1 (371 aa).

A signal peptide spans 1–28 (MGRVISSWRVLAVVAALMAMAAVELCAA). A propeptide spans 29 to 133 (IPFDERDLES…LPGFMYEGVR (105 aa)) (activation peptide). Disulfide bonds link Cys-156/Cys-198, Cys-190/Cys-231, and Cys-290/Cys-342. Cys-159 is an active-site residue. A glycan (N-linked (GlcNAc...) asparagine) is linked at Asn-228. Catalysis depends on residues His-296 and Asn-317.

Belongs to the peptidase C1 family. Expressed in germinating seeds.

Its subcellular location is the protein storage vacuole. Its function is as follows. Cysteine endopeptidase that digests in vitro both the acidic and basic subunits of glutelin, the major seed storage protein of rice. Acts as a negative regulator of cell death. The sequence is that of Cysteine endopeptidase Rep1 from Oryza sativa subsp. japonica (Rice).